Consider the following 116-residue polypeptide: Iron-sulfur cluster insertion protein ErpA (116 aa).

Residues Cys44, Cys108, and Cys110 each contribute to the iron-sulfur cluster site.

The protein belongs to the HesB/IscA family. In terms of assembly, homodimer. The cofactor is iron-sulfur cluster.

Functionally, required for insertion of 4Fe-4S clusters for at least IspG. This Idiomarina loihiensis (strain ATCC BAA-735 / DSM 15497 / L2-TR) protein is Iron-sulfur cluster insertion protein ErpA.